Consider the following 332-residue polypeptide: RING-H2 finger protein ATL81 (332 aa).

The first 19 residues, 1–19 (MYDLTFLLISLFPIDITLP), serve as a signal peptide directing secretion. Residues 76–96 (IVLTGSLLFIIFTGFFSFFFC) form a helical membrane-spanning segment. The RING-type; atypical zinc-finger motif lies at 154 to 196 (CSICLTEFMDDDTIRLISTCNHSFHTICIDLWFEGHKTCPVCR).

It belongs to the RING-type zinc finger family. ATL subfamily.

The protein localises to the membrane. It catalyses the reaction S-ubiquitinyl-[E2 ubiquitin-conjugating enzyme]-L-cysteine + [acceptor protein]-L-lysine = [E2 ubiquitin-conjugating enzyme]-L-cysteine + N(6)-ubiquitinyl-[acceptor protein]-L-lysine.. The protein operates within protein modification; protein ubiquitination. This Arabidopsis thaliana (Mouse-ear cress) protein is RING-H2 finger protein ATL81 (ATL81).